A 486-amino-acid chain; its full sequence is Nucleolar GTP-binding protein 2 (486 aa).

Positions 1 to 20 (MGTGKKEKSRRIREGDTKDG) are disordered. 3 positions are modified to phosphoserine: S60, S85, and S155. The 162-residue stretch at 212-373 (WNELYKVIDS…LIDCPGIVPP (162 aa)) folds into the CP-type G domain. Residues 322–329 (GYPNTGKS) and 366–370 (DCPGI) each bind GTP.

Belongs to the TRAFAC class YlqF/YawG GTPase family. NOG2 subfamily.

The protein localises to the nucleus. Its subcellular location is the nucleolus. Its function is as follows. GTPase that associates with pre-60S ribosomal subunits in the nucleolus and is required for their nuclear export and maturation. The sequence is that of Nucleolar GTP-binding protein 2 (NOG2) from Saccharomyces cerevisiae (strain ATCC 204508 / S288c) (Baker's yeast).